Here is a 399-residue protein sequence, read N- to C-terminus: MTSDEAKKARFCLHGGPSYEGYSFGAPVSVGGEVVFTTSLVGYPDSMTDPSYKGQILVFTQPLIGNYGVPDGSVRDQYGLLKYMESSKVHVSAIVVAEYAWEYSHWTAVQSLGDWCRKEGVAAIGGIDTRAVVQYLRESGSTMGRVDVEGAAASARVVDPSKVNLVAQVSTKSPFYIPGKPSRVNYDVALVDCGVKENILRCLVVRGVNVTVFPYDYDVCSIAHHFDGVFISNGPGDPIHYRNSTVANLRRLLQDPDLQQVPIFGICMGHQLLALAAGASTVKMKYGNRAHNIPALDLSTGQCHITSQNHGYAVDAATLPRDEFVPLFVNLNDKSNEGIIHVSRPIYSTQFHPEGKGGPMDCSFLFDEYVERMRCYRKLFRQEPFIRFPVIGLPKARVL.

Positions Asp187–Leu379 constitute a Glutamine amidotransferase type-1 domain. The Nucleophile role is filled by Cys267. Residues His352 and Glu354 contribute to the active site.

The protein belongs to the CarA family. Heterodimer composed of 2 chains; the small (or glutamine) chain promotes the hydrolysis of glutamine to ammonia, which is used by the large (or ammonia) chain to synthesize carbamoyl phosphate.

It localises to the cytoplasm. The enzyme catalyses hydrogencarbonate + L-glutamine + 2 ATP + H2O = carbamoyl phosphate + L-glutamate + 2 ADP + phosphate + 2 H(+). The catalysed reaction is L-glutamine + H2O = L-glutamate + NH4(+). Its pathway is amino-acid biosynthesis; L-arginine biosynthesis; carbamoyl phosphate from bicarbonate: step 1/1. Functionally, small subunit of the arginine-specific carbamoyl phosphate synthase (CPSase). CPSase catalyzes the formation of carbamoyl phosphate from the ammonia moiety of glutamine, carbonate, and phosphate donated by ATP, constituting the first step of 2 biosynthetic pathways, one leading to arginine and/or urea and the other to pyrimidine nucleotides. The small subunit (glutamine amidotransferase) binds and cleaves glutamine to supply the large subunit with the substrate ammonia. The polypeptide is Carbamoyl phosphate synthase arginine-specific small chain (CPA1) (Eremothecium gossypii (strain ATCC 10895 / CBS 109.51 / FGSC 9923 / NRRL Y-1056) (Yeast)).